The primary structure comprises 200 residues: Transcription elongation factor A protein-like 6 (200 aa).

The interval 1-200 (MEKPYNKNEG…QRGLHDIPYL (200 aa)) is disordered. Residues 20–36 (DEVEPDDEGKSDEEEKP) are compositionally biased toward acidic residues. Ser30 is subject to Phosphoserine. 3 stretches are compositionally biased toward basic and acidic residues: residues 37–52 (DAEG…KAEG), 60–80 (LEDK…KPQG), and 115–154 (DRGT…EELR). At Ser65 the chain carries Phosphoserine.

The protein belongs to the TFS-II family. TFA subfamily.

It is found in the nucleus. Functionally, may be involved in transcriptional regulation. This chain is Transcription elongation factor A protein-like 6 (TCEAL6), found in Homo sapiens (Human).